Here is a 209-residue protein sequence, read N- to C-terminus: Large ribosomal subunit protein uL4 (209 aa).

The disordered stretch occupies residues 47–72; that stretch reads TSSTKTRSEVRGSSKKPWKQKGTGRA. The span at 59-72 shows a compositional bias: basic residues; that stretch reads SSKKPWKQKGTGRA.

The protein belongs to the universal ribosomal protein uL4 family. In terms of assembly, part of the 50S ribosomal subunit.

In terms of biological role, one of the primary rRNA binding proteins, this protein initially binds near the 5'-end of the 23S rRNA. It is important during the early stages of 50S assembly. It makes multiple contacts with different domains of the 23S rRNA in the assembled 50S subunit and ribosome. Its function is as follows. Forms part of the polypeptide exit tunnel. This Borreliella burgdorferi (strain ZS7) (Borrelia burgdorferi) protein is Large ribosomal subunit protein uL4.